The primary structure comprises 298 residues: Ethanolamine ammonia-lyase small subunit (298 aa).

Positions 1–19 (MDQKQIEEIVRSVMASMGQ) are targets protein to the BMC. Residues V210, E231, and C261 each contribute to the adenosylcob(III)alamin site.

Belongs to the EutC family. The basic unit is a heterodimer which dimerizes to form tetramers. The heterotetramers trimerize; 6 large subunits form a core ring with 6 small subunits projecting outwards. Interacts with EutS, which targets it to the interior of the BMC. Adenosylcob(III)alamin serves as cofactor.

It is found in the bacterial microcompartment. The enzyme catalyses ethanolamine = acetaldehyde + NH4(+). It functions in the pathway amine and polyamine degradation; ethanolamine degradation. Its function is as follows. Catalyzes the deamination of various vicinal amino-alcohols to oxo compounds. It is spontaneously inactivated by its substrate and reactivated by EutA. May play a role in bacterial microcompartment (BMC) assembly or maintenance. Directly targeted to the BMC. Functionally, expression of the eut operon allows this bacteria to use ethanolamine (EA) as a carbon, nitrogen and energy source. It relies on cobalamin (vitamin B12) both as a cofactor for the ethanolamine ammonia-lyase activity and to induce the operon. EA enhances bacterial survival in macrophages in a concentration-dependent manner, suggesting it is an important nutrient during infection. This chain is Ethanolamine ammonia-lyase small subunit, found in Salmonella typhimurium (strain LT2 / SGSC1412 / ATCC 700720).